A 473-amino-acid chain; its full sequence is Argininosuccinate lyase (473 aa).

This sequence belongs to the lyase 1 family. Argininosuccinate lyase subfamily.

The protein resides in the cytoplasm. The enzyme catalyses 2-(N(omega)-L-arginino)succinate = fumarate + L-arginine. It functions in the pathway amino-acid biosynthesis; L-arginine biosynthesis; L-arginine from L-ornithine and carbamoyl phosphate: step 3/3. The sequence is that of Argininosuccinate lyase from Chelativorans sp. (strain BNC1).